The chain runs to 640 residues: Chaperone protein HtpG (640 aa).

Residues 1–352 (MTEQTATQNY…SADLPLNVSR (352 aa)) are a; substrate-binding. The tract at residues 353–571 (ELLQESRDVK…DGELSPQLIR (219 aa)) is b. Positions 572 to 640 (MLKQAGQAVP…VKRINSLLLK (69 aa)) are c.

This sequence belongs to the heat shock protein 90 family. In terms of assembly, homodimer.

Its subcellular location is the cytoplasm. Molecular chaperone. Has ATPase activity. The protein is Chaperone protein HtpG of Acinetobacter baylyi (strain ATCC 33305 / BD413 / ADP1).